The sequence spans 363 residues: 3-dehydroquinate synthase (363 aa).

NAD(+) is bound by residues 70 to 75 (SGETSK), 104 to 108 (GVIGD), 128 to 129 (TT), lysine 141, lysine 150, and 168 to 171 (TLDT). Zn(2+) contacts are provided by glutamate 183, histidine 245, and histidine 262.

The protein belongs to the sugar phosphate cyclases superfamily. Dehydroquinate synthase family. Requires Co(2+) as cofactor. It depends on Zn(2+) as a cofactor. NAD(+) is required as a cofactor.

The protein resides in the cytoplasm. The catalysed reaction is 7-phospho-2-dehydro-3-deoxy-D-arabino-heptonate = 3-dehydroquinate + phosphate. It functions in the pathway metabolic intermediate biosynthesis; chorismate biosynthesis; chorismate from D-erythrose 4-phosphate and phosphoenolpyruvate: step 2/7. In terms of biological role, catalyzes the conversion of 3-deoxy-D-arabino-heptulosonate 7-phosphate (DAHP) to dehydroquinate (DHQ). This is 3-dehydroquinate synthase from Alkaliphilus oremlandii (strain OhILAs) (Clostridium oremlandii (strain OhILAs)).